A 115-amino-acid polypeptide reads, in one-letter code: MVSNASALGRNGVHDFILVRATAIVLTLYIIYMVGFFATSGELTYEVWIGFFASAFTKVFTLLALFSILIHAWIGMWQVLTDYVKPLALRLMLQLVIVVALVVYVIYGFVVVWGV.

Topologically, residues 1–15 (MVSNASALGRNGVHD) are cytoplasmic. Residues 16–36 (FILVRATAIVLTLYIIYMVGF) traverse the membrane as a helical segment. The Periplasmic segment spans residues 37–58 (FATSGELTYEVWIGFFASAFTK). The helical transmembrane segment at 59-80 (VFTLLALFSILIHAWIGMWQVL) threads the bilayer. Heme is bound at residue H71. The Cytoplasmic portion of the chain corresponds to 81-90 (TDYVKPLALR). A ubiquinone is bound at residue Y83. Residues 91-115 (LMLQLVIVVALVVYVIYGFVVVWGV) traverse the membrane as a helical segment.

In terms of assembly, part of an enzyme complex containing four subunits: a flavoprotein, an iron-sulfur protein, plus two membrane-anchoring proteins, SdhC and SdhD. The complex can form homotrimers. Heme is required as a cofactor.

It localises to the cell inner membrane. The protein operates within carbohydrate metabolism; tricarboxylic acid cycle. In terms of biological role, membrane-anchoring subunit of succinate dehydrogenase (SDH). The chain is Succinate dehydrogenase hydrophobic membrane anchor subunit (sdhD) from Escherichia coli O6:H1 (strain CFT073 / ATCC 700928 / UPEC).